The primary structure comprises 326 residues: Olfactory receptor 11H2 (326 aa).

Residues 1-44 (MCPLTLHVTGLMNVSEPNSSFAFVNEFILQGFSCEWTIQIFLFS) lie on the Extracellular side of the membrane. Residues Asn13 and Asn18 are each glycosylated (N-linked (GlcNAc...) asparagine). A helical membrane pass occupies residues 45-65 (LFTTIYALTITGNGAIAFVLW). The Cytoplasmic portion of the chain corresponds to 66–72 (CDRRLHT). Residues 73 to 93 (PMYMFLGNFSFLEIWYVSSTV) traverse the membrane as a helical segment. The Extracellular portion of the chain corresponds to 94–112 (PKMLVNFLSEKKNISFAGC). Asn106 carries N-linked (GlcNAc...) asparagine glycosylation. A disulfide bridge links Cys112 with Cys194. A helical transmembrane segment spans residues 113-133 (FLQFYFFFSLGTSECLLLTVM). Topologically, residues 134-158 (AFDQYLAICRPLLYPNIMTGHLYAK) are cytoplasmic. Residues 159–179 (LVILCWVCGFLWFLIPIVLIS) traverse the membrane as a helical segment. Residues 180–216 (QKPFCGPNIIDHVVCDPGPLFALDCVSAPRIQLFCYT) lie on the Extracellular side of the membrane. Residues 217–237 (LSSLVIFGNFLFIIGSYTLVL) form a helical membrane-spanning segment. Residues 238-259 (KAVLGMPSSTGRHKAFSTCGSH) lie on the Cytoplasmic side of the membrane. Residues 260 to 280 (LAVVSLCYSPLMVMYVSPGLG) form a helical membrane-spanning segment. Residues 281–287 (HSTGMQK) lie on the Extracellular side of the membrane. Residues 288–308 (IETLFYAMVTPLFNPLIYSLQ) traverse the membrane as a helical segment. Residues 309–326 (NKEIKAALRKVLGSSNII) are Cytoplasmic-facing.

The protein belongs to the G-protein coupled receptor 1 family.

It localises to the cell membrane. Functionally, odorant receptor. In Homo sapiens (Human), this protein is Olfactory receptor 11H2 (OR11H2).